A 315-amino-acid chain; its full sequence is Olfactory receptor 3A1 (315 aa).

Topologically, residues 1-28 (MQPESGANGTVIAEFILLGLLEAPGLQP) are extracellular. The N-linked (GlcNAc...) asparagine glycan is linked to Asn8. Residues 29–52 (VVFVLFLFAYLVTVGGNLSILAAV) traverse the membrane as a helical segment. Over 53–60 (LVEPKLHS) the chain is Cytoplasmic. Residues 61–82 (PMYFFLGNLSVLDVGCISVTVP) form a helical membrane-spanning segment. Residues 83–103 (SMLSRLLSRKRAVPCGACLTQ) are Extracellular-facing. Cys100 and Cys192 are oxidised to a cystine. The helical transmembrane segment at 104-123 (LFFFHLFVGVDCFLLTAMAY) threads the bilayer. The Cytoplasmic segment spans residues 124–143 (DRFLAICRPLTYSTRMSQTV). A helical transmembrane segment spans residues 144–161 (QRMLVAASWACAFTNALT). At 162 to 199 (HTVAMSTLNFCGPNEVNHFYCDLPQLFQLSCSSTQLNE) the chain is on the extracellular side. A helical membrane pass occupies residues 200–223 (LLLFAVGFIMAGTPMALIVISYIH). Residues 224 to 240 (VAAAVLRIRSVEGRKKA) are Cytoplasmic-facing. The chain crosses the membrane as a helical span at residues 241–264 (FSTCGSHLTVVAMFYGSGIFNYMR). Residues 265-275 (LGSTKLSDKDK) are Extracellular-facing. A helical transmembrane segment spans residues 276–295 (AVGIFNTVINPMVNPIIYRF). Residues 296–315 (RNPEVQSAIWRMLTGRRSLA) lie on the Cytoplasmic side of the membrane.

Belongs to the G-protein coupled receptor 1 family.

The protein resides in the cell membrane. Functionally, odorant receptor. This is Olfactory receptor 3A1 (OR3A1) from Pan troglodytes (Chimpanzee).